The following is a 432-amino-acid chain: Serine--tRNA ligase (432 aa).

237-239 (TSE) is an L-serine binding site. Residue 268–270 (RSE) participates in ATP binding. E291 is an L-serine binding site. 355-358 (EISS) serves as a coordination point for ATP. S390 is an L-serine binding site.

The protein belongs to the class-II aminoacyl-tRNA synthetase family. Type-1 seryl-tRNA synthetase subfamily. In terms of assembly, homodimer. The tRNA molecule binds across the dimer.

The protein localises to the cytoplasm. The catalysed reaction is tRNA(Ser) + L-serine + ATP = L-seryl-tRNA(Ser) + AMP + diphosphate + H(+). It catalyses the reaction tRNA(Sec) + L-serine + ATP = L-seryl-tRNA(Sec) + AMP + diphosphate + H(+). It participates in aminoacyl-tRNA biosynthesis; selenocysteinyl-tRNA(Sec) biosynthesis; L-seryl-tRNA(Sec) from L-serine and tRNA(Sec): step 1/1. In terms of biological role, catalyzes the attachment of serine to tRNA(Ser). Is also able to aminoacylate tRNA(Sec) with serine, to form the misacylated tRNA L-seryl-tRNA(Sec), which will be further converted into selenocysteinyl-tRNA(Sec). This chain is Serine--tRNA ligase, found in Methylobacillus flagellatus (strain ATCC 51484 / DSM 6875 / VKM B-1610 / KT).